Here is a 161-residue protein sequence, read N- to C-terminus: QSEPAGPPQPYTFSYDNTDEYGTRIAQEETGDENNNKVGSYSYTDPNGISRTVKYVADAEGFRVTVETNEPGTKTSNPADAQIVSNAATDSYSPSPASSPAKPPSLAVNAAPITIHAVHASPVVHAIHAAPVSYATAHHVTPVIALSHAPLTYTLGRAKSA.

Position 1 is a pyrrolidone carboxylic acid (Gln1). Over residues 1 to 10 (QSEPAGPPQP) the composition is skewed to pro residues. Disordered stretches follow at residues 1 to 44 (QSEP…YSYT) and 67 to 103 (ETNEPGTKTSNPADAQIVSNAATDSYSPSPASSPAKP). The region spanning 8–74 (PQPYTFSYDN…TVETNEPGTK (67 aa)) is the Chitin-binding type R&amp;R domain. Residues 67–86 (ETNEPGTKTSNPADAQIVSN) are compositionally biased toward polar residues. Residues 87–103 (AATDSYSPSPASSPAKP) show a composition bias toward low complexity.

Functionally, component of the cuticle of the tick. Binds chitin. The protein is Cuticle protein 16.8 of Ixodes ricinus (Common tick).